Reading from the N-terminus, the 513-residue chain is Carboxyethyl-arginine beta-lactam-synthase (513 aa).

Positions 253 and 351 each coordinate Mg(2+).

Belongs to the asparagine synthetase family. In terms of assembly, homodimer. Mg(2+) is required as a cofactor.

The catalysed reaction is N(2)-(2-carboxyethyl)-L-arginine + ATP = deoxyamidinoproclavaminate + AMP + diphosphate + H(+). It functions in the pathway antibiotic biosynthesis; clavulanate biosynthesis; clavulanate from D-glyceraldehyde 3-phosphate and L-arginine: step 2/8. The sequence is that of Carboxyethyl-arginine beta-lactam-synthase (bls) from Streptomyces clavuligerus.